The following is a 279-amino-acid chain: Elongation factor Ts (279 aa).

Residues 79–82 are involved in Mg(2+) ion dislocation from EF-Tu; sequence TDFV.

It belongs to the EF-Ts family.

It localises to the cytoplasm. Its function is as follows. Associates with the EF-Tu.GDP complex and induces the exchange of GDP to GTP. It remains bound to the aminoacyl-tRNA.EF-Tu.GTP complex up to the GTP hydrolysis stage on the ribosome. In Phytoplasma mali (strain AT), this protein is Elongation factor Ts.